The following is a 428-amino-acid chain: Inward rectifier potassium channel 2 (428 aa).

Residues 1-81 lie on the Cytoplasmic side of the membrane; sequence MGSVRTNRYS…IFTTCVDIRW (81 aa). An S-nitrosocysteine modification is found at cysteine 76. The helical transmembrane segment at 82-106 threads the bilayer; that stretch reads RWMLVIFCLAFVLSWLFFGCVFWLI. The Extracellular portion of the chain corresponds to 107–128; that stretch reads ALLHGDLDTSKVSKACVSEVNS. The helical; Pore-forming intramembrane region spans 129–140; it reads FTAAFLFSIETQ. Positions 141–147 form an intramembrane region, pore-forming; it reads TTIGYGF. The Selectivity filter motif lies at 142–147; it reads TIGYGF. The Extracellular segment spans residues 148 to 156; that stretch reads RCVTDECPI. A helical transmembrane segment spans residues 157–178; sequence AVFMVVFQSIVGCIIDAFIIGA. Over 179–428 the chain is Cytoplasmic; sequence VMAKMAKPKK…PRPLRRESEI (250 aa). Positions 181 to 208 are polyphosphoinositide (PIP2)-binding; it reads AKMAKPKKRNETLVFSHNAVIAMRDGKL. The tract at residues 383–428 is disordered; it reads TSKEEEEDSENGVPESTSTDSPPGIDLHNQASVPLEPRPLRRESEI. The short motif at 426 to 428 is the PDZ-binding element; sequence SEI.

Belongs to the inward rectifier-type potassium channel (TC 1.A.2.1) family. KCNJ2 subfamily. Homotetramer. Homomultimeric and heteromultimeric association with KCNJ4/Kir2.3. Can form heteromeric channels with Kir2.6/KCNJ18. Associates, via its PDZ-recognition domain, with a complex containing LIN7A, LIN7B, LIN7C, DLG1, CASK and APBA1. In terms of processing, S-nitrosylation increases the open probability and inward rectifying currents. Prominently expressed in the central nervous system. Also found in other excitable tissues such as heart and skeletal muscle.

The protein localises to the cell membrane. It localises to the sarcolemma. It is found in the T-tubule. The catalysed reaction is K(+)(in) = K(+)(out). Its activity is regulated as follows. Activated by phosphatidylinositol 4,5 biphosphate (PtdIns(4,5)P2). In terms of biological role, inward rectifier potassium channels are characterized by a greater tendency to allow potassium to flow into the cell rather than out of it. Their voltage dependence is regulated by the concentration of extracellular potassium; as external potassium is raised, the voltage range of the channel opening shifts to more positive voltages. The inward rectification is mainly due to the blockage of outward current by internal magnesium. Can be blocked by extracellular barium and cesium. Probably participates in establishing action potential waveform and excitability of neuronal and muscle tissues. This is Inward rectifier potassium channel 2 (Kcnj2) from Mus musculus (Mouse).